Reading from the N-terminus, the 200-residue chain is NAD(P)H-quinone oxidoreductase subunit 6, chloroplastic (200 aa).

5 helical membrane passes run Ile13 to Ser33, Ile35 to Ala55, Ala64 to Ile84, Ile102 to Ser122, and Leu156 to Ile176.

This sequence belongs to the complex I subunit 6 family. NDH is composed of at least 16 different subunits, 5 of which are encoded in the nucleus.

Its subcellular location is the plastid. The protein localises to the chloroplast thylakoid membrane. It carries out the reaction a plastoquinone + NADH + (n+1) H(+)(in) = a plastoquinol + NAD(+) + n H(+)(out). It catalyses the reaction a plastoquinone + NADPH + (n+1) H(+)(in) = a plastoquinol + NADP(+) + n H(+)(out). In terms of biological role, NDH shuttles electrons from NAD(P)H:plastoquinone, via FMN and iron-sulfur (Fe-S) centers, to quinones in the photosynthetic chain and possibly in a chloroplast respiratory chain. The immediate electron acceptor for the enzyme in this species is believed to be plastoquinone. Couples the redox reaction to proton translocation, and thus conserves the redox energy in a proton gradient. This Physcomitrium patens (Spreading-leaved earth moss) protein is NAD(P)H-quinone oxidoreductase subunit 6, chloroplastic (ndhG).